Here is a 354-residue protein sequence, read N- to C-terminus: Peroxisomal membrane protein PEX32 (354 aa).

5 helical membrane passes run 24–44, 63–83, 84–104, 151–171, and 173–193; these read LLNM…VIFL, FIAI…ACTV, LPTI…TTID, GFSL…IFTV, and SFLL…SVAT. Asparagine 319 carries N-linked (GlcNAc...) asparagine glycosylation.

It belongs to the PEX28-32 family. PEX30/31 subfamily.

Its subcellular location is the peroxisome membrane. It is found in the endoplasmic reticulum membrane. With PEX24, contributes to tethering of peroxisomes to the endoplasmic reticulum for organelle biogenesis, positioning and segregation. This Ogataea parapolymorpha (strain ATCC 26012 / BCRC 20466 / JCM 22074 / NRRL Y-7560 / DL-1) (Yeast) protein is Peroxisomal membrane protein PEX32.